The sequence spans 487 residues: Bifunctional protein GlmU (487 aa).

Positions 1–235 are pyrophosphorylase; it reads MSHSPTPLAA…PEEASGVNDR (235 aa). UDP-N-acetyl-alpha-D-glucosamine-binding positions include 13–16, Lys-27, Gln-82, 87–88, 110–112, Gly-147, Glu-162, Asn-177, and Asn-233; these read LAAG, GT, and SGD. Asp-112 provides a ligand contact to Mg(2+). Mg(2+) is bound at residue Asn-233. The tract at residues 236–256 is linker; the sequence is EELARAGRVLLRRRASELMRS. Residues 257–487 are N-acetyltransferase; that stretch reads GVTIEDPERF…ADSPRGGRAS (231 aa). UDP-N-acetyl-alpha-D-glucosamine-binding residues include Arg-339 and Lys-357. Catalysis depends on His-369, which acts as the Proton acceptor. 2 residues coordinate UDP-N-acetyl-alpha-D-glucosamine: Tyr-372 and Asn-383. Acetyl-CoA-binding positions include Ala-386, 392-393, Ser-411, Ala-429, and Arg-446; that span reads NY. A disordered region spans residues 453–487; sequence EGWVARRKAEAQNKGAAEAAPAPSPADSPRGGRAS. The segment covering 468-481 has biased composition (low complexity); it reads AAEAAPAPSPADSP.

The protein in the N-terminal section; belongs to the N-acetylglucosamine-1-phosphate uridyltransferase family. In the C-terminal section; belongs to the transferase hexapeptide repeat family. Homotrimer. The cofactor is Mg(2+).

It localises to the cytoplasm. It catalyses the reaction alpha-D-glucosamine 1-phosphate + acetyl-CoA = N-acetyl-alpha-D-glucosamine 1-phosphate + CoA + H(+). The enzyme catalyses N-acetyl-alpha-D-glucosamine 1-phosphate + UTP + H(+) = UDP-N-acetyl-alpha-D-glucosamine + diphosphate. Its pathway is nucleotide-sugar biosynthesis; UDP-N-acetyl-alpha-D-glucosamine biosynthesis; N-acetyl-alpha-D-glucosamine 1-phosphate from alpha-D-glucosamine 6-phosphate (route II): step 2/2. The protein operates within nucleotide-sugar biosynthesis; UDP-N-acetyl-alpha-D-glucosamine biosynthesis; UDP-N-acetyl-alpha-D-glucosamine from N-acetyl-alpha-D-glucosamine 1-phosphate: step 1/1. It participates in bacterial outer membrane biogenesis; LPS lipid A biosynthesis. In terms of biological role, catalyzes the last two sequential reactions in the de novo biosynthetic pathway for UDP-N-acetylglucosamine (UDP-GlcNAc). The C-terminal domain catalyzes the transfer of acetyl group from acetyl coenzyme A to glucosamine-1-phosphate (GlcN-1-P) to produce N-acetylglucosamine-1-phosphate (GlcNAc-1-P), which is converted into UDP-GlcNAc by the transfer of uridine 5-monophosphate (from uridine 5-triphosphate), a reaction catalyzed by the N-terminal domain. The polypeptide is Bifunctional protein GlmU (Anaeromyxobacter sp. (strain Fw109-5)).